The primary structure comprises 222 residues: Small ribosomal subunit protein uS3 (222 aa).

In terms of domain architecture, KH type-2 spans 39–109 (IRNFVKKKVY…NILINIVEVK (71 aa)).

It belongs to the universal ribosomal protein uS3 family. In terms of assembly, part of the 30S ribosomal subunit. Forms a tight complex with proteins S10 and S14.

Its function is as follows. Binds the lower part of the 30S subunit head. Binds mRNA in the 70S ribosome, positioning it for translation. The protein is Small ribosomal subunit protein uS3 of Clostridium tetani (strain Massachusetts / E88).